We begin with the raw amino-acid sequence, 680 residues long: DNA-directed RNA polymerase subunit beta' (680 aa).

Zn(2+) contacts are provided by C69, C71, C87, and C90. Mg(2+) contacts are provided by D489, D491, and D493.

It belongs to the RNA polymerase beta' chain family. RpoC1 subfamily. In plastids the minimal PEP RNA polymerase catalytic core is composed of four subunits: alpha, beta, beta', and beta''. When a (nuclear-encoded) sigma factor is associated with the core the holoenzyme is formed, which can initiate transcription. Mg(2+) is required as a cofactor. Zn(2+) serves as cofactor.

It is found in the plastid. It localises to the chloroplast. It catalyses the reaction RNA(n) + a ribonucleoside 5'-triphosphate = RNA(n+1) + diphosphate. Its function is as follows. DNA-dependent RNA polymerase catalyzes the transcription of DNA into RNA using the four ribonucleoside triphosphates as substrates. The polypeptide is DNA-directed RNA polymerase subunit beta' (Citrus sinensis (Sweet orange)).